The sequence spans 95 residues: ESAT-6-like protein EsxA (95 aa).

This sequence belongs to the WXG100 family. ESAT-6 subfamily. As to quaternary structure, forms a tight 1:1 complex with EsxB. An artificial EsxA-EsxB heterodimer interacts with EspA.

It is found in the secreted. Its function is as follows. An exported protein. Unlike its M.tuberculosis counterpart has poor pore forming ability in artificial liposomes, does not undergo conformational change at acidic pH. Mutation of 2 residues to those found in M.tuberculosis (25-TA-26 to IH) alters the properties of this protein so that it inserts into liposomes at acidic pH, forming pores, like its M.tuberculosis counterpart. The sequence is that of ESAT-6-like protein EsxA from Mycolicibacterium smegmatis (strain ATCC 700084 / mc(2)155) (Mycobacterium smegmatis).